A 260-amino-acid chain; its full sequence is Transcriptional activator protein AsaR (260 aa).

One can recognise an HTH luxR-type domain in the interval 176 to 241 (EDDPQEALTD…QAIAKGVSSG (66 aa)). A DNA-binding region (H-T-H motif) is located at residues 200–219 (SGEIACILGITERTVNYHLN).

The protein belongs to the autoinducer-regulated transcriptional regulatory protein family.

Functions as a BHL-responsive transcriptional regulator. This chain is Transcriptional activator protein AsaR, found in Aeromonas salmonicida.